The primary structure comprises 242 residues: Triosephosphate isomerase (242 aa).

A substrate-binding site is contributed by asparagine 8–lysine 10. The Electrophile role is filled by histidine 98. Glutamate 167 acts as the Proton acceptor in catalysis. Substrate-binding positions include glycine 173, serine 205, and glycine 226–glycine 227.

It belongs to the triosephosphate isomerase family. In terms of assembly, homodimer.

The protein localises to the cytoplasm. It carries out the reaction D-glyceraldehyde 3-phosphate = dihydroxyacetone phosphate. Its pathway is carbohydrate biosynthesis; gluconeogenesis. The protein operates within carbohydrate degradation; glycolysis; D-glyceraldehyde 3-phosphate from glycerone phosphate: step 1/1. Involved in the gluconeogenesis. Catalyzes stereospecifically the conversion of dihydroxyacetone phosphate (DHAP) to D-glyceraldehyde-3-phosphate (G3P). The chain is Triosephosphate isomerase from Mesomycoplasma hyopneumoniae (strain 7448) (Mycoplasma hyopneumoniae).